The following is a 110-amino-acid chain: Insulin (110 aa).

The signal sequence occupies residues 1–24 (MALWMRLLPLLALLALWAPAPTRA). 3 cysteine pairs are disulfide-bonded: C31/C96, C43/C109, and C95/C100. The propeptide at 57-87 (EVEDLQVRDVELAGAPGEGGLQPLALEGALQ) is c peptide.

This sequence belongs to the insulin family. As to quaternary structure, heterodimer of a B chain and an A chain linked by two disulfide bonds.

Its subcellular location is the secreted. In terms of biological role, insulin decreases blood glucose concentration. It increases cell permeability to monosaccharides, amino acids and fatty acids. It accelerates glycolysis, the pentose phosphate cycle, and glycogen synthesis in liver. This chain is Insulin (INS), found in Canis lupus familiaris (Dog).